Reading from the N-terminus, the 906-residue chain is Formin-like protein 18 (906 aa).

A signal peptide spans 1 to 25 (MSKLRWLIMAFLVCLLLLTPKDLEG). The chain crosses the membrane as a helical span at residues 120-140 (MVVVGLSAACVALVTLVGICF). Disordered stretches follow at residues 267–416 (AGGG…QADP) and 854–906 (NAKA…DSDD). The span at 274–292 (AAPPPPAGPPPPAPPPLPP) shows a compositional bias: pro residues. Over residues 293-303 (SHHHHHGHHPP) the composition is skewed to basic residues. Composition is skewed to pro residues over residues 320–339 (APPP…PAPS), 348–375 (GPPP…PPPG), and 383–402 (GPPP…PPFK). Low complexity-rich tracts occupy residues 403–416 (KSPG…QADP) and 854–877 (NAKA…QSSF). One can recognise an FH2 domain in the interval 411–866 (AAQADPNKAK…AKKQQQPTPA (456 aa)). Residues 878–889 (RDPRQQIQDRRA) show a composition bias toward basic and acidic residues. Low complexity predominate over residues 897 to 906 (SSSSSSDSDD).

This sequence belongs to the formin-like family. Class-I subfamily.

The protein localises to the membrane. This is Formin-like protein 18 (FH18) from Oryza sativa subsp. japonica (Rice).